The sequence spans 494 residues: Protein nucleotidyltransferase YdiU (494 aa).

Residues glycine 101, glycine 103, arginine 104, lysine 123, aspartate 135, glycine 136, arginine 186, and arginine 193 each coordinate ATP. Catalysis depends on aspartate 262, which acts as the Proton acceptor. Mg(2+) is bound by residues asparagine 263 and aspartate 272. ATP is bound at residue aspartate 272.

It belongs to the SELO family. It depends on Mg(2+) as a cofactor. Mn(2+) is required as a cofactor.

The catalysed reaction is L-seryl-[protein] + ATP = 3-O-(5'-adenylyl)-L-seryl-[protein] + diphosphate. The enzyme catalyses L-threonyl-[protein] + ATP = 3-O-(5'-adenylyl)-L-threonyl-[protein] + diphosphate. It catalyses the reaction L-tyrosyl-[protein] + ATP = O-(5'-adenylyl)-L-tyrosyl-[protein] + diphosphate. It carries out the reaction L-histidyl-[protein] + UTP = N(tele)-(5'-uridylyl)-L-histidyl-[protein] + diphosphate. The catalysed reaction is L-seryl-[protein] + UTP = O-(5'-uridylyl)-L-seryl-[protein] + diphosphate. The enzyme catalyses L-tyrosyl-[protein] + UTP = O-(5'-uridylyl)-L-tyrosyl-[protein] + diphosphate. In terms of biological role, nucleotidyltransferase involved in the post-translational modification of proteins. It can catalyze the addition of adenosine monophosphate (AMP) or uridine monophosphate (UMP) to a protein, resulting in modifications known as AMPylation and UMPylation. This chain is Protein nucleotidyltransferase YdiU, found in Chromohalobacter salexigens (strain ATCC BAA-138 / DSM 3043 / CIP 106854 / NCIMB 13768 / 1H11).